We begin with the raw amino-acid sequence, 423 residues long: Glycine-rich protein 1 (423 aa).

A signal peptide spans 1–20 (MKKICLTFVFLLSLFPIYSS). 4 disordered regions span residues 28–47 (TIES…AGPA), 78–133 (DDDN…SKKN), 159–219 (KGGS…GAGA), and 236–288 (GASA…ASAG). A compositionally biased stretch (low complexity) spans 31-42 (SGSSKSSGSSVG). Basic and acidic residues-rich tracts occupy residues 81 to 93 (NKDK…DGKT) and 102 to 111 (QNGDDVKSDN). The segment covering 159–172 (KGGSANNGGEGGAT) has biased composition (gly residues). Positions 173–183 (SAGSAGATSGA) are enriched in low complexity. 2 stretches are compositionally biased toward gly residues: residues 205 to 219 (GAGG…GAGA) and 236 to 247 (GASAGAGAGGAQ). Positions 248 to 284 (GDAEAASAGSTAGSTSSGGAAASGASSGAGSSDSGQG) are enriched in low complexity.

In terms of tissue distribution, nacreous layer of shell (at protein level).

Its subcellular location is the secreted. The sequence is that of Glycine-rich protein 1 from Pinctada maxima (Silver-lipped pearl oyster).